The sequence spans 319 residues: Taste receptor type 2 member 30 (319 aa).

Met-1 is a topological domain (extracellular). The helical transmembrane segment at 2–22 (ITFLPIIFSILIVVIFVVGNF) threads the bilayer. Over 23 to 46 (ANGFIALVNSIEWVKRQKISFVDQ) the chain is Cytoplasmic. Residues 47-67 (ILTALAVSRVGLLWVLLLHWY) form a helical membrane-spanning segment. Over 68 to 86 (ATQLNPAFYSVEVRITVYN) the chain is Extracellular. Residues 87–107 (VWAVTNHFSSWLATSLSMFYL) form a helical membrane-spanning segment. Residues 108-126 (LKIANFSNLIFLRIKRRVK) are Cytoplasmic-facing. A helical membrane pass occupies residues 127–147 (SVVLVILLGPLLFLVCHLFVI). Residues 148 to 178 (NMDETIWTKEYEGNMTWKIKLKSAMYHSNMT) lie on the Extracellular side of the membrane. 2 N-linked (GlcNAc...) asparagine glycosylation sites follow: Asn-161 and Asn-176. Residues 179–199 (LTILANFVPLTLTLISFLLLI) form a helical membrane-spanning segment. The Cytoplasmic segment spans residues 200-229 (CSLCKHLKKMQLHGKGSQDPSTKVHIKALQ). The chain crosses the membrane as a helical span at residues 230–250 (TVTSFLLLCAIYFLSMIISVC). The Extracellular portion of the chain corresponds to 251–259 (NLGRLQKQP). The chain crosses the membrane as a helical span at residues 260–280 (VFMFCQAIIFSYPSTHPFILI). Residues 281 to 319 (LGNKKLKQIFLSVLWHVRYWVKDRSLRLHRFTRAALCKG) lie on the Cytoplasmic side of the membrane.

It belongs to the G-protein coupled receptor T2R family.

It localises to the membrane. Its function is as follows. Receptor that may play a role in the perception of bitterness and is gustducin-linked. May play a role in sensing the chemical composition of the gastrointestinal content. The activity of this receptor may stimulate alpha gustducin, mediate PLC-beta-2 activation and lead to the gating of TRPM5. The sequence is that of Taste receptor type 2 member 30 (TAS2R30) from Pan paniscus (Pygmy chimpanzee).